Here is a 326-residue protein sequence, read N- to C-terminus: Biotin synthase (326 aa).

Positions 51-278 (NRVQVSRLIS…KSFVRLSAGR (228 aa)) constitute a Radical SAM core domain. The [4Fe-4S] cluster site is built by Cys66, Cys70, and Cys73. Cys110, Cys141, Cys201, and Arg273 together coordinate [2Fe-2S] cluster.

Belongs to the radical SAM superfamily. Biotin synthase family. In terms of assembly, homodimer. [4Fe-4S] cluster is required as a cofactor. Requires [2Fe-2S] cluster as cofactor.

It carries out the reaction (4R,5S)-dethiobiotin + (sulfur carrier)-SH + 2 reduced [2Fe-2S]-[ferredoxin] + 2 S-adenosyl-L-methionine = (sulfur carrier)-H + biotin + 2 5'-deoxyadenosine + 2 L-methionine + 2 oxidized [2Fe-2S]-[ferredoxin]. Its pathway is cofactor biosynthesis; biotin biosynthesis; biotin from 7,8-diaminononanoate: step 2/2. Functionally, catalyzes the conversion of dethiobiotin (DTB) to biotin by the insertion of a sulfur atom into dethiobiotin via a radical-based mechanism. The chain is Biotin synthase from Paramagnetospirillum magneticum (strain ATCC 700264 / AMB-1) (Magnetospirillum magneticum).